The sequence spans 34 residues: Photosystem II reaction center protein T (34 aa).

Residues 3-23 traverse the membrane as a helical segment; the sequence is ALVYTFLLVSTLGIIFFAIFF.

This sequence belongs to the PsbT family. In terms of assembly, PSII is composed of 1 copy each of membrane proteins PsbA, PsbB, PsbC, PsbD, PsbE, PsbF, PsbH, PsbI, PsbJ, PsbK, PsbL, PsbM, PsbT, PsbY, PsbZ, Psb30/Ycf12, at least 3 peripheral proteins of the oxygen-evolving complex and a large number of cofactors. It forms dimeric complexes.

Its subcellular location is the plastid. It is found in the chloroplast thylakoid membrane. Found at the monomer-monomer interface of the photosystem II (PS II) dimer, plays a role in assembly and dimerization of PSII. PSII is a light-driven water plastoquinone oxidoreductase, using light energy to abstract electrons from H(2)O, generating a proton gradient subsequently used for ATP formation. This chain is Photosystem II reaction center protein T, found in Solanum bulbocastanum (Wild potato).